The following is an 843-amino-acid chain: Aminopeptidase N (843 aa).

Residues E120 and 252–256 (GAMEN) contribute to the substrate site. H288 provides a ligand contact to Zn(2+). The active-site Proton acceptor is E289. The Zn(2+) site is built by H292 and E311.

It belongs to the peptidase M1 family. As to quaternary structure, monomer. Zn(2+) serves as cofactor.

It is found in the cytoplasm. The catalysed reaction is Release of an N-terminal amino acid, Xaa-|-Yaa- from a peptide, amide or arylamide. Xaa is preferably Ala, but may be most amino acids including Pro (slow action). When a terminal hydrophobic residue is followed by a prolyl residue, the two may be released as an intact Xaa-Pro dipeptide.. Aminopeptidase with broad substrate specificity to several peptides. This chain is Aminopeptidase N (pepN), found in Lactobacillus delbrueckii subsp. lactis.